Here is a 424-residue protein sequence, read N- to C-terminus: Omega-6 fatty acid desaturase, chloroplastic (424 aa).

Residues 1 to 63 (MACTLADSLL…TRNKVTVIHA (63 aa)) constitute a chloroplast transit peptide. N-acetylvaline is present on V64. The Histidine box-1 motif lies at 165 to 169 (HDCAH). A Histidine box-2 motif is present at residues 201–205 (HDRHH). Residues 361 to 365 (HIPHH) carry the Histidine box-3 motif.

It belongs to the fatty acid desaturase type 1 family.

The protein resides in the plastid. It is found in the chloroplast membrane. It carries out the reaction a (9Z)-octadecenoyl-containing glycerolipid + 2 reduced [2Fe-2S]-[ferredoxin] + O2 + 2 H(+) = a (9Z,12Z)-octadecadienoyl-containing glycerolipid + 2 oxidized [2Fe-2S]-[ferredoxin] + 2 H2O. Its pathway is lipid metabolism; polyunsaturated fatty acid biosynthesis. Chloroplast omega-6 fatty acid desaturase introduces the second double bond in the biosynthesis of 16:3 and 18:3 fatty acids, important constituents of plant membranes. It is thought to use ferredoxin as an electron donor and to act on fatty acids esterified to galactolipids, sulfolipids and phosphatidylglycerol. This chain is Omega-6 fatty acid desaturase, chloroplastic, found in Glycine max (Soybean).